Consider the following 340-residue polypeptide: Ketol-acid reductoisomerase (NADP(+)) (340 aa).

Positions 2-182 (AELYYDNQAD…GCTRAGVLRT (181 aa)) constitute a KARI N-terminal Rossmann domain. Residues 25 to 28 (FGSQ), Ser51, Ser53, and 83 to 86 (DIGQ) contribute to the NADP(+) site. Residue His108 is part of the active site. Position 134 (Gly134) interacts with NADP(+). The 146-residue stretch at 183-328 (TFAEETETDL…RELRRMMPFV (146 aa)) folds into the KARI C-terminal knotted domain. Mg(2+) contacts are provided by Asp191, Glu195, Glu227, and Glu231. A substrate-binding site is contributed by Ser252.

This sequence belongs to the ketol-acid reductoisomerase family. Mg(2+) serves as cofactor.

The catalysed reaction is (2R)-2,3-dihydroxy-3-methylbutanoate + NADP(+) = (2S)-2-acetolactate + NADPH + H(+). The enzyme catalyses (2R,3R)-2,3-dihydroxy-3-methylpentanoate + NADP(+) = (S)-2-ethyl-2-hydroxy-3-oxobutanoate + NADPH + H(+). It functions in the pathway amino-acid biosynthesis; L-isoleucine biosynthesis; L-isoleucine from 2-oxobutanoate: step 2/4. It participates in amino-acid biosynthesis; L-valine biosynthesis; L-valine from pyruvate: step 2/4. Involved in the biosynthesis of branched-chain amino acids (BCAA). Catalyzes an alkyl-migration followed by a ketol-acid reduction of (S)-2-acetolactate (S2AL) to yield (R)-2,3-dihydroxy-isovalerate. In the isomerase reaction, S2AL is rearranged via a Mg-dependent methyl migration to produce 3-hydroxy-3-methyl-2-ketobutyrate (HMKB). In the reductase reaction, this 2-ketoacid undergoes a metal-dependent reduction by NADPH to yield (R)-2,3-dihydroxy-isovalerate. In Chloroflexus aggregans (strain MD-66 / DSM 9485), this protein is Ketol-acid reductoisomerase (NADP(+)).